Consider the following 192-residue polypeptide: Glycerol-3-phosphate acyltransferase (192 aa).

The next 5 helical transmembrane spans lie at 1-21 (MTSA…GVLL), 51-71 (LGAV…VLAV), 78-98 (PTVH…PVWL), 112-132 (VLLV…VAVF), and 155-175 (LTAR…LMLW).

This sequence belongs to the PlsY family. Probably interacts with PlsX.

Its subcellular location is the cell inner membrane. The enzyme catalyses an acyl phosphate + sn-glycerol 3-phosphate = a 1-acyl-sn-glycero-3-phosphate + phosphate. Its pathway is lipid metabolism; phospholipid metabolism. Its function is as follows. Catalyzes the transfer of an acyl group from acyl-phosphate (acyl-PO(4)) to glycerol-3-phosphate (G3P) to form lysophosphatidic acid (LPA). This enzyme utilizes acyl-phosphate as fatty acyl donor, but not acyl-CoA or acyl-ACP. The sequence is that of Glycerol-3-phosphate acyltransferase from Myxococcus xanthus (strain DK1622).